An 892-amino-acid polypeptide reads, in one-letter code: Translation initiation factor IF-2 (892 aa).

Residues 165–175 (EEQAELERQKT) show a composition bias toward basic and acidic residues. 2 disordered regions span residues 165–250 (EEQA…EDDS) and 264–300 (ERARRGSNTRGKGGGSHRGATHRGNENSIRSSGAHGF). Positions 208–222 (PRAVRPAPAARPSVS) are enriched in low complexity. Positions 391–560 (PRPPVVTIMG…SIQAEVLELK (170 aa)) constitute a tr-type G domain. GTP-binding positions include 400-407 (GHVDHGKT), 446-450 (DTPGH), and 500-503 (SKID).

The protein belongs to the TRAFAC class translation factor GTPase superfamily. Classic translation factor GTPase family. IF-2 subfamily.

It is found in the cytoplasm. Its function is as follows. One of the essential components for the initiation of protein synthesis. Protects formylmethionyl-tRNA from spontaneous hydrolysis and promotes its binding to the 30S ribosomal subunits. Also involved in the hydrolysis of GTP during the formation of the 70S ribosomal complex. The polypeptide is Translation initiation factor IF-2 (Xylella fastidiosa (strain 9a5c)).